The following is a 356-amino-acid chain: Ion-translocating oxidoreductase complex subunit D (356 aa).

Transmembrane regions (helical) follow at residues 20–40 (LMLLVVYATIPGMFTMTWFFG), 42–62 (GVLVNVLLASISCMLFEALAI), 68–88 (PVGFYLRDFSALVTGVLIGVS), and 117–137 (GFNPFNPAMVAYALLLVSFPV). An FMN phosphoryl threonine modification is found at threonine 177. The next 5 helical transmembrane spans lie at 205–225 (WASAGWEWVNIAFLFGGLYLL), 229–249 (VYTWHAPVSMLLALALMAALF), 259–279 (GSPLFHLLTGATMLGAFFIVT), 292–312 (VIYGALIGMLVYVIRTWGSSY), and 315–335 (GVAFAVLLMNFAAPFIDYYTT).

Belongs to the NqrB/RnfD family. In terms of assembly, the complex is composed of six subunits: RnfA, RnfB, RnfC, RnfD, RnfE and RnfG. FMN serves as cofactor.

The protein localises to the cell inner membrane. Functionally, part of a membrane-bound complex that couples electron transfer with translocation of ions across the membrane. The protein is Ion-translocating oxidoreductase complex subunit D of Cellvibrio japonicus (strain Ueda107) (Pseudomonas fluorescens subsp. cellulosa).